A 234-amino-acid polypeptide reads, in one-letter code: Sugar fermentation stimulation protein homolog (234 aa).

This sequence belongs to the SfsA family.

The protein is Sugar fermentation stimulation protein homolog of Citrobacter koseri (strain ATCC BAA-895 / CDC 4225-83 / SGSC4696).